The following is a 336-amino-acid chain: MSKKRVLTGVTTTGIPHLGNYVGAIRPAVRAAQNPDTESFLFLADYHGIIKCHEPEMIHQSTQAVAATWLACGLDPERTTFYRQSDIPEVMELNWILTCITAKGLMNRAHAYKAAVQANAENGQEDPDFGVEMGLYSYPILMTADILMFNAHEVPVGRDQIQHVEMARDIAGRFNHRFRELFTLPEVKIDENVELLVGLDGRKMSKSYGNTIPLWENDKKTQKSVNKIITNMKEPGEPKKPDESPLFEIYKAFSTPSETAEFTKMLADGLAWGEAKKLLAAKINAELAEPRERYNELTADPSQIEEILQAGAQKARKEARELLGKVRDAVGIRPLK.

ATP-binding positions include 11 to 13 (TTT) and 19 to 20 (GN). The 'HIGH' region signature appears at 12–20 (TTGIPHLGN). Asp-145 provides a ligand contact to L-tryptophan. ATP is bound by residues 157-159 (GRD), Leu-196, and 203-207 (KMSKS). The short motif at 203-207 (KMSKS) is the 'KMSKS' region element.

The protein belongs to the class-I aminoacyl-tRNA synthetase family. Homodimer.

It localises to the cytoplasm. The catalysed reaction is tRNA(Trp) + L-tryptophan + ATP = L-tryptophyl-tRNA(Trp) + AMP + diphosphate + H(+). Functionally, catalyzes the attachment of tryptophan to tRNA(Trp). The sequence is that of Tryptophan--tRNA ligase from Neisseria meningitidis serogroup A / serotype 4A (strain DSM 15465 / Z2491).